Consider the following 397-residue polypeptide: tRNA(Met) cytidine acetate ligase (397 aa).

Residues 7 to 20 (VTEYNPFHNGHIYH), glycine 101, asparagine 152, and arginine 177 each bind ATP.

Belongs to the TmcAL family.

It localises to the cytoplasm. The enzyme catalyses cytidine(34) in elongator tRNA(Met) + acetate + ATP = N(4)-acetylcytidine(34) in elongator tRNA(Met) + AMP + diphosphate. In terms of biological role, catalyzes the formation of N(4)-acetylcytidine (ac(4)C) at the wobble position of elongator tRNA(Met), using acetate and ATP as substrates. First activates an acetate ion to form acetyladenylate (Ac-AMP) and then transfers the acetyl group to tRNA to form ac(4)C34. The polypeptide is tRNA(Met) cytidine acetate ligase (Leuconostoc citreum (strain KM20)).